The sequence spans 689 residues: Glycine--tRNA ligase beta subunit (689 aa).

It belongs to the class-II aminoacyl-tRNA synthetase family. Tetramer of two alpha and two beta subunits.

The protein localises to the cytoplasm. It catalyses the reaction tRNA(Gly) + glycine + ATP = glycyl-tRNA(Gly) + AMP + diphosphate. This Pectobacterium carotovorum subsp. carotovorum (strain PC1) protein is Glycine--tRNA ligase beta subunit.